A 513-amino-acid polypeptide reads, in one-letter code: MAIKQNGRAHLSSDIDFIRTPEAPVDSLSTGKNPGVPSTNSPAIKNAPLPADGPGYEQWSNGFLVAALLGIPQWLSWKLGGGLKTAIFLSIFTTIPVLAVIWTVMSRYSPRINHDVKLPGRPVEFYLTFKSDSHRARWTGTHKIPMATFFELYFTGQVDLNGDALEVFEYRHDWATFNFTSETFRYILFTFFPDVVLHLRSQDEEQVRTNYDSGNDHYAWFLGPRMIYTSGIISDPTREETLEEMQDNKLAIVCEKISLKEGDTLLDIGCGWGTLAKFASLNYGAKVTGVTLARNQVQWGNDGLQQAGIPEEQSRLLCCDYRDIPEDQKFNKITQLEMAEHVGVRRLTGFFRQCYDMLENDGSMYVQVSGFRKAWQYEDFIWGLFLNKYIFPGADASTPLSYYVGCLESAGFEVKSVDTIGVHYSGTLWRWYRNWLGNADKVKAKYGVRWFRIWEIFLAYSTIGSRQGSATCYQIVVVKNLNSNHRIDGVYSQYGLHGALAAAKAAGKNMLPK.

Transmembrane regions (helical) follow at residues 63-83 and 85-105; these read FLVA…GGGL and TAIF…WTVM. S-adenosyl-L-methionine contacts are provided by residues 228–229, 265–273, 291–296, and 321–322; these read YT, LLDIGCGWG, TLARNQ, and YR.

This sequence belongs to the CFA/CMAS family.

Its subcellular location is the membrane. It catalyses the reaction a (4E,8E)-4-sphinga-4,8-dienine ceramide + S-adenosyl-L-methionine = a 9-methyl-(4E,8E)-sphinga-4,8-dienine ceramide + S-adenosyl-L-homocysteine + H(+). The protein operates within lipid metabolism; sphingolipid metabolism. Its function is as follows. Catalyzes methylation of the sphingoid base component of glucosylceramides (GluCers) at the C9-position. Sphingolipid C9-methylation requires 4,8-desaturated ceramides as substrates. Glucosylceramides play important roles in the growth, differentiation and pathogenicity. The methyl group at the C9-position distinguishes fungal glucosylceramides from those of plants and animals, and may thus play a role in host-pathogen interactions enabling the host to recognize the fungal attack and initiate specific defense responses. However, C-9 methylation of GlcCers is not essential for the sensitivity of F.graminearum to plant defensins MsDef1 and RsAFP2. This is Sphingolipid C9-methyltransferase 1 from Gibberella zeae (strain ATCC MYA-4620 / CBS 123657 / FGSC 9075 / NRRL 31084 / PH-1) (Wheat head blight fungus).